The following is a 362-amino-acid chain: TFLVRESESKPGDYSLSIQDGDNVKHYRIRKLDEGGFFITRRAVFNTLKDLVQYYQNESDGLCVNLRQPCRPLERPQIDLSHKTKDMWEISRDSITLIRKLGAGQFGEVYQGLWNNSTPVAVKTLKAGTMQPAAFLAEAQIMKKLRHPKLIQLYAVCTQGEPVYIITELMSKGSLLDYLQGEAGALKLPQLIDMAAQVAAGMAYLELHNYIHRDLAARNILVGDNNICKVADFGLARLIVSDDYNATEGAKFPIKWTAPEAALFNRFSIKSDVWSFGILITELVTYGRIPYPGMSNAEVLQNLDKGYRMPCPVTTPESLYQIMLDCWKRNPADRPTFEALQWRLEDFFVLDAGQYQHAADVL.

In terms of domain architecture, SH2 spans 1 to 70 (TFLVRESESK…GLCVNLRQPC (70 aa)). Positions 95 to 348 (ITLIRKLGAG…ALQWRLEDFF (254 aa)) constitute a Protein kinase domain. ATP-binding positions include 101 to 109 (LGAGQFGEV) and Lys123. The active-site Proton acceptor is the Asp214.

It belongs to the protein kinase superfamily. Tyr protein kinase family.

It is found in the cytoplasm. The enzyme catalyses L-tyrosyl-[protein] + ATP = O-phospho-L-tyrosyl-[protein] + ADP + H(+). This Spongilla lacustris (Freshwater sponge) protein is Tyrosine-protein kinase SRK2 (SRK2).